A 220-amino-acid polypeptide reads, in one-letter code: Iron-sulfur cluster repair protein YtfE (220 aa).

It belongs to the RIC family. YtfE subfamily. In terms of assembly, homodimer.

It is found in the cytoplasm. Functionally, di-iron-containing protein involved in the repair of iron-sulfur clusters damaged by oxidative and nitrosative stress conditions. The protein is Iron-sulfur cluster repair protein YtfE of Escherichia coli O81 (strain ED1a).